The following is a 320-amino-acid chain: GTP 3',8-cyclase (320 aa).

Residues 5–225 form the Radical SAM core domain; the sequence is QFGRKINYLR…IQLIKKDEKA (221 aa). R14 contributes to the GTP binding site. 2 residues coordinate [4Fe-4S] cluster: C21 and C25. Y27 lines the S-adenosyl-L-methionine pocket. Residue C28 coordinates [4Fe-4S] cluster. R64 provides a ligand contact to GTP. G68 contacts S-adenosyl-L-methionine. T95 contributes to the GTP binding site. S-adenosyl-L-methionine is bound at residue S119. Residue K155 participates in GTP binding. Residue M189 participates in S-adenosyl-L-methionine binding. Residues C248 and C251 each contribute to the [4Fe-4S] cluster site. A GTP-binding site is contributed by 253 to 255; sequence RIR. C265 serves as a coordination point for [4Fe-4S] cluster.

This sequence belongs to the radical SAM superfamily. MoaA family. In terms of assembly, monomer and homodimer. [4Fe-4S] cluster serves as cofactor.

It catalyses the reaction GTP + AH2 + S-adenosyl-L-methionine = (8S)-3',8-cyclo-7,8-dihydroguanosine 5'-triphosphate + 5'-deoxyadenosine + L-methionine + A + H(+). Its pathway is cofactor biosynthesis; molybdopterin biosynthesis. Its function is as follows. Catalyzes the cyclization of GTP to (8S)-3',8-cyclo-7,8-dihydroguanosine 5'-triphosphate. The chain is GTP 3',8-cyclase from Campylobacter jejuni subsp. jejuni serotype O:6 (strain 81116 / NCTC 11828).